Consider the following 334-residue polypeptide: GTP 3',8-cyclase (334 aa).

In terms of domain architecture, Radical SAM core spans 13–239 (KFHRKFYYLR…KVRSHHDGPA (227 aa)). Arginine 22 lines the GTP pocket. Positions 29 and 33 each coordinate [4Fe-4S] cluster. Tyrosine 35 contacts S-adenosyl-L-methionine. [4Fe-4S] cluster is bound at residue cysteine 36. Arginine 73 lines the GTP pocket. Glycine 77 serves as a coordination point for S-adenosyl-L-methionine. Threonine 104 lines the GTP pocket. An S-adenosyl-L-methionine-binding site is contributed by serine 128. Lysine 165 is a GTP binding site. Methionine 199 provides a ligand contact to S-adenosyl-L-methionine. Positions 262 and 265 each coordinate [4Fe-4S] cluster. GTP is bound at residue 267–269 (RLR). [4Fe-4S] cluster is bound at residue cysteine 279.

It belongs to the radical SAM superfamily. MoaA family. Monomer and homodimer. Requires [4Fe-4S] cluster as cofactor.

The catalysed reaction is GTP + AH2 + S-adenosyl-L-methionine = (8S)-3',8-cyclo-7,8-dihydroguanosine 5'-triphosphate + 5'-deoxyadenosine + L-methionine + A + H(+). It participates in cofactor biosynthesis; molybdopterin biosynthesis. Catalyzes the cyclization of GTP to (8S)-3',8-cyclo-7,8-dihydroguanosine 5'-triphosphate. The protein is GTP 3',8-cyclase of Vibrio parahaemolyticus serotype O3:K6 (strain RIMD 2210633).